We begin with the raw amino-acid sequence, 138 residues long: Putative pre-16S rRNA nuclease (138 aa).

This sequence belongs to the YqgF nuclease family.

It localises to the cytoplasm. In terms of biological role, could be a nuclease involved in processing of the 5'-end of pre-16S rRNA. In Caldicellulosiruptor bescii (strain ATCC BAA-1888 / DSM 6725 / KCTC 15123 / Z-1320) (Anaerocellum thermophilum), this protein is Putative pre-16S rRNA nuclease.